The following is a 488-amino-acid chain: Histamine H1 receptor (488 aa).

Topologically, residues 1–38 (MSFLPGMTPVTLSNFSWALEDRMLEGNSTTTPTRQLMP) are extracellular. Residues asparagine 14 and asparagine 27 are each glycosylated (N-linked (GlcNAc...) asparagine). A helical transmembrane segment spans residues 39-59 (LVVVLSSVSLVTVALNLLVLY). At 60–73 (AVRSERKLHTVGNL) the chain is on the cytoplasmic side. The chain crosses the membrane as a helical span at residues 74 to 98 (YIVSLSVADLIVGAVVMPMSILYLH). Over 99 to 106 (RSAWILGR) the chain is Extracellular. Residues 107-132 (PLCLFWLSMDYVASTASIFSVFILCI) form a helical membrane-spanning segment. A disulfide bridge links cysteine 109 with cysteine 189. The histamine site is built by aspartate 116 and threonine 121. An important for agonist binding region spans residues 116–121 (DYVAST). Residues 133 to 153 (DRYRSVQQPLRYLRYRTKTRA) lie on the Cytoplasmic side of the membrane. Phosphothreonine is present on residues threonine 149 and threonine 151. Residues 154–173 (SATILGAWLLSFLWVIPILG) form a helical membrane-spanning segment. Residues 174-197 (WHHFMAPTSEPREKKCETDFYDVT) are Extracellular-facing. The chain crosses the membrane as a helical span at residues 198-220 (WFKVMTAIINFYLPTLLMLWFYI). Asparagine 207 serves as a coordination point for histamine. At 221–417 (RIYKAVRRHC…LNRERKAAKQ (197 aa)) the chain is on the cytoplasmic side. Serine 239 carries the phosphoserine modification. Residues 259–274 (RMGKESPWEDPKRCSK) are compositionally biased toward basic and acidic residues. The tract at residues 259–285 (RMGKESPWEDPKRCSKDASGVHTPMPS) is disordered. Residues serine 345, serine 381, serine 383, serine 397, and serine 399 each carry the phosphoserine modification. Residues 418 to 441 (LGCIMAAFILCWIPYFVFFMVIAF) traverse the membrane as a helical segment. The tract at residues 425–429 (FILCW) is important for agonist binding. Tyrosine 432 is a histamine binding site. Cysteine 442 and cysteine 445 are oxidised to a cystine. At 442–447 (CKSCSN) the chain is on the extracellular side. A helical membrane pass occupies residues 448–470 (EPVHMFTIWLGYLNSTLNPLIYP). The Cytoplasmic portion of the chain corresponds to 471-488 (LCNENFRKTFKRILRIPP).

It belongs to the G-protein coupled receptor 1 family. Phosphorylation at sites in the second and third cytoplasmic loops independently contribute to agonist-induced receptor down-regulation.

It localises to the cell membrane. In terms of biological role, G-protein-coupled receptor for histamine, a biogenic amine that functions as an immune modulator and a neurotransmitter. Through the H1 receptor, histamine mediates the contraction of smooth muscles and increases capillary permeability due to contraction of terminal venules. Also mediates neurotransmission in the central nervous system and thereby regulates circadian rhythms, emotional and locomotor activities as well as cognitive functions. This Cavia porcellus (Guinea pig) protein is Histamine H1 receptor.